Consider the following 501-residue polypeptide: Cytochrome P450 2S1 (501 aa).

Cysteine 441 is a binding site for heme.

The protein belongs to the cytochrome P450 family. Heme serves as cofactor.

Its subcellular location is the endoplasmic reticulum membrane. It is found in the microsome membrane. It catalyses the reaction all-trans-retinoate + reduced [NADPH--hemoprotein reductase] + O2 = all-trans-5,6-epoxyretinoate + oxidized [NADPH--hemoprotein reductase] + H2O + H(+). The enzyme catalyses all-trans-retinoate + reduced [NADPH--hemoprotein reductase] + O2 = all-trans-4-hydroxyretinoate + oxidized [NADPH--hemoprotein reductase] + H2O + H(+). The catalysed reaction is (5S)-hydroperoxy-(6E,8Z,11Z,14Z)-eicosatetraenoate = 5-oxo-(6E,8Z,11Z,14Z)-eicosatetraenoate + H2O. It carries out the reaction (12S)-hydroperoxy-(5Z,8Z,10E,14Z)-eicosatetraenoate = 12-oxo-(5Z,8Z,10E,14Z)-eicosatetraenoate + H2O. It catalyses the reaction (15S)-hydroperoxy-(5Z,8Z,11Z,13E)-eicosatetraenoate = 15-oxo-(5Z,8Z,11Z,13E)-eicosatetraenoate + H2O. The enzyme catalyses prostaglandin H2 = thromboxane A2. The catalysed reaction is prostaglandin H2 = (12S)-hydroxy-(5Z,8E,10E)-heptadecatrienoate + malonaldehyde. It carries out the reaction (13S)-hydroperoxy-(9Z,11E)-octadecadienoate = 13-oxo-(9Z,11E)-octadecadienoate + H2O. The protein operates within lipid metabolism; fatty acid metabolism. A cytochrome P450 monooxygenase involved in the metabolism of retinoids and eicosanoids. In epidermis, may contribute to the oxidative metabolism of all-trans-retinoic acid. For this activity, uses molecular oxygen inserting one oxygen atom into a substrate, and reducing the second into a water molecule, with two electrons provided by NADPH via cytochrome P450 reductase (NADPH--hemoprotein reductase). Additionally, displays peroxidase and isomerase activities toward various oxygenated eicosanoids such as prostaglandin H2 (PGH2) and hydroperoxyeicosatetraenoates (HPETEs). Independently of cytochrome P450 reductase, NADPH, and O2, catalyzes the breakdown of PGH2 to hydroxyheptadecatrienoic acid (HHT) and malondialdehyde (MDA), which is known to act as a mediator of DNA damage. The chain is Cytochrome P450 2S1 (Cyp2s1) from Mus musculus (Mouse).